The primary structure comprises 261 residues: Chanoclavine-I dehydrogenase easD (261 aa).

A signal peptide spans 1–20; sequence MPSMTSKVFAITGGASGIGA. Ile-18 contacts NADP(+). Residue Asn-43 is glycosylated (N-linked (GlcNAc...) asparagine). Positions 66, 132, 166, 170, and 201 each coordinate NADP(+). Tyr-166 serves as the catalytic Proton donor. Residue Lys-170 is the Lowers pKa of active site Tyr of the active site.

This sequence belongs to the short-chain dehydrogenases/reductases (SDR) family. Homotetramer.

It carries out the reaction chanoclavine-I + NAD(+) = chanoclavine-I aldehyde + NADH + H(+). It functions in the pathway alkaloid biosynthesis; ergot alkaloid biosynthesis. Its function is as follows. Chanoclavine-I dehydrogenase; part of the gene cluster that mediates the biosynthesis of fungal ergot alkaloid. DmaW catalyzes the first step of ergot alkaloid biosynthesis by condensing dimethylallyl diphosphate (DMAP) and tryptophan to form 4-dimethylallyl-L-tryptophan. The second step is catalyzed by the methyltransferase easF that methylates 4-dimethylallyl-L-tryptophan in the presence of S-adenosyl-L-methionine, resulting in the formation of 4-dimethylallyl-L-abrine. The catalase easC and the FAD-dependent oxidoreductase easE then transform 4-dimethylallyl-L-abrine to chanoclavine-I which is further oxidized by easD in the presence of NAD(+), resulting in the formation of chanoclavine-I aldehyde. Agroclavine dehydrogenase easG then mediates the conversion of chanoclavine-I aldehyde to agroclavine via a non-enzymatic adduct reaction: the substrate is an iminium intermediate that is formed spontaneously from chanoclavine-I aldehyde in the presence of glutathione. The presence of easA is not required to complete this reaction. Further conversion of agroclavine to paspalic acid is a two-step process involving oxidation of agroclavine to elymoclavine and of elymoclavine to paspalic acid, the second step being performed by the elymoclavine oxidase cloA. Paspalic acid is then further converted to D-lysergic acid. Ergopeptines are assembled from D-lysergic acid and three different amino acids by the D-lysergyl-peptide-synthetases composed each of a monomudular and a trimodular nonribosomal peptide synthetase subunit. LpsB and lpsC encode the monomodular subunits responsible for D-lysergic acid activation and incorporation into the ergopeptine backbone. LpsA1 and A2 subunits encode the trimodular nonribosomal peptide synthetase assembling the tripeptide portion of ergopeptines. LpsA1 is responsible for formation of the major ergopeptine, ergotamine, and lpsA2 for alpha-ergocryptine, the minor ergopeptine of the total alkaloid mixture elaborated by C.purpurea. D-lysergyl-tripeptides are assembled by the nonribosomal peptide synthetases and released as N-(D-lysergyl-aminoacyl)-lactams. Cyclolization of the D-lysergyl-tripeptides is performed by the Fe(2+)/2-ketoglutarate-dependent dioxygenase easH which introduces a hydroxyl group into N-(D-lysergyl-aminoacyl)-lactam at alpha-C of the aminoacyl residue followed by spontaneous condensation with the terminal lactam carbonyl group. This is Chanoclavine-I dehydrogenase easD from Claviceps purpurea (Ergot fungus).